Reading from the N-terminus, the 113-residue chain is Large ribosomal subunit protein bL19 (113 aa).

It belongs to the bacterial ribosomal protein bL19 family.

In terms of biological role, this protein is located at the 30S-50S ribosomal subunit interface and may play a role in the structure and function of the aminoacyl-tRNA binding site. This is Large ribosomal subunit protein bL19 from Mycolicibacterium smegmatis (strain ATCC 700084 / mc(2)155) (Mycobacterium smegmatis).